The sequence spans 301 residues: Troponin T, cardiac muscle (301 aa).

The span at Met1–Val72 shows a compositional bias: acidic residues. Disordered regions lie at residues Met1–Arg97 and Asn125–Ile224. Ser2 is modified (N-acetylserine). Ser2 bears the Phosphoserine; by CK2 mark. Basic and acidic residues-rich tracts occupy residues Asn125–Arg186 and Gln206–Ile224. Position 207 is a phosphothreonine; by PKC/PRKCA (Thr207). A Phosphoserine; by PKC/PRKCA modification is found at Ser211. Thr216 is modified (phosphothreonine; by PKC/PRKCA and RAF1). Thr297 bears the Phosphothreonine; by PKC/PRKCA mark.

The protein belongs to the troponin T family. Post-translationally, phosphorylation at Thr-216 by PRKCA induces significant reduction in myofilament calcium sensitivity and actomyosin ATPase activity.

Its function is as follows. Troponin T is the tropomyosin-binding subunit of troponin, the thin filament regulatory complex which confers calcium-sensitivity to striated muscle actomyosin ATPase activity. The protein is Troponin T, cardiac muscle (Tnnt2) of Mus musculus (Mouse).